The following is a 545-amino-acid chain: Hsk1-interacting molecule 1 (545 aa).

The segment at 492 to 541 (VDAKPGYCENCREKFDNFESHIRSSRHRRFAENNDNFKDLDELFALVQRP) adopts a DBF4-type zinc-finger fold. The Zn(2+) site is built by Cys499, Cys502, His512, and His518.

As to quaternary structure, associates with hsk1. Interacts with mcm10. In terms of processing, hyperphosphorylated at the G1/S and S-phases of the cell cycle.

It is found in the nucleus. Activates hsk1 kinase and is essential for G1/S transition. Has a role in S-phase checkpoint control induced by replication fork blocks after nucleotide deprivation and DNA damage. In Schizosaccharomyces pombe (strain 972 / ATCC 24843) (Fission yeast), this protein is Hsk1-interacting molecule 1 (him1).